A 324-amino-acid polypeptide reads, in one-letter code: Acetyl-coenzyme A carboxylase carboxyl transferase subunit alpha (324 aa).

The CoA carboxyltransferase C-terminal domain occupies 37–291 (KLEKRLDKLK…REFIIQEWLR (255 aa)).

It belongs to the AccA family. In terms of assembly, acetyl-CoA carboxylase is a heterohexamer composed of biotin carboxyl carrier protein (AccB), biotin carboxylase (AccC) and two subunits each of ACCase subunit alpha (AccA) and ACCase subunit beta (AccD).

It localises to the cytoplasm. It carries out the reaction N(6)-carboxybiotinyl-L-lysyl-[protein] + acetyl-CoA = N(6)-biotinyl-L-lysyl-[protein] + malonyl-CoA. It functions in the pathway lipid metabolism; malonyl-CoA biosynthesis; malonyl-CoA from acetyl-CoA: step 1/1. Component of the acetyl coenzyme A carboxylase (ACC) complex. First, biotin carboxylase catalyzes the carboxylation of biotin on its carrier protein (BCCP) and then the CO(2) group is transferred by the carboxyltransferase to acetyl-CoA to form malonyl-CoA. In Chlamydia pneumoniae (Chlamydophila pneumoniae), this protein is Acetyl-coenzyme A carboxylase carboxyl transferase subunit alpha.